Consider the following 127-residue polypeptide: Large ribosomal subunit protein bL12 (127 aa).

The protein belongs to the bacterial ribosomal protein bL12 family. Homodimer. Part of the ribosomal stalk of the 50S ribosomal subunit. Forms a multimeric L10(L12)X complex, where L10 forms an elongated spine to which 2 to 4 L12 dimers bind in a sequential fashion. Binds GTP-bound translation factors.

In terms of biological role, forms part of the ribosomal stalk which helps the ribosome interact with GTP-bound translation factors. Is thus essential for accurate translation. In Clavibacter michiganensis subsp. michiganensis (strain NCPPB 382), this protein is Large ribosomal subunit protein bL12.